The chain runs to 328 residues: tRNA uridine(34) hydroxylase (328 aa).

The Rhodanese domain maps to 130–224 (LDEDTVVLDT…YGKDPEVQGE (95 aa)). Catalysis depends on C184, which acts as the Cysteine persulfide intermediate.

The protein belongs to the TrhO family.

The catalysed reaction is uridine(34) in tRNA + AH2 + O2 = 5-hydroxyuridine(34) in tRNA + A + H2O. Catalyzes oxygen-dependent 5-hydroxyuridine (ho5U) modification at position 34 in tRNAs. This chain is tRNA uridine(34) hydroxylase, found in Streptococcus sanguinis (strain SK36).